A 262-amino-acid chain; its full sequence is Aminoglycoside (3'') (9) adenylyltransferase (262 aa).

It catalyses the reaction streptomycin + ATP = 3''-O-adenylylstreptomycin + diphosphate. It carries out the reaction spectinomycin + ATP = 9-O-adenylylspectinomycin + diphosphate. In terms of biological role, mediates bacterial resistance to the antibiotics streptomycin and spectinomycin. This chain is Aminoglycoside (3'') (9) adenylyltransferase, found in Klebsiella pneumoniae.